The following is a 465-amino-acid chain: Mitochondrial-processing peptidase subunit beta (465 aa).

His-79 is a binding site for Zn(2+). Glu-82 functions as the Proton acceptor in the catalytic mechanism. 2 residues coordinate Zn(2+): His-83 and Glu-159.

This sequence belongs to the peptidase M16 family. Heterodimer of an alpha subunit and a beta subunit subunits, forming the mitochondrial processing protease (MPP) in which the alpha subunit is involved in substrate recognition and binding and the beta subunit is the catalytic subunit. Requires Zn(2+) as cofactor.

Its subcellular location is the mitochondrion matrix. It catalyses the reaction Release of N-terminal transit peptides from precursor proteins imported into the mitochondrion, typically with Arg in position P2.. Binding to the alpha subunit is required for catalytic activity. Its function is as follows. Catalytic subunit of the essential mitochondrial processing protease (MPP), which cleaves the mitochondrial sequence off newly imported precursors proteins. Preferentially, cleaves after an arginine at position P2. The polypeptide is Mitochondrial-processing peptidase subunit beta (MPP1) (Blastocladiella emersonii (Aquatic fungus)).